We begin with the raw amino-acid sequence, 147 residues long: Large ribosomal subunit protein uL13 (147 aa).

It belongs to the universal ribosomal protein uL13 family. Part of the 50S ribosomal subunit.

Its function is as follows. This protein is one of the early assembly proteins of the 50S ribosomal subunit, although it is not seen to bind rRNA by itself. It is important during the early stages of 50S assembly. The polypeptide is Large ribosomal subunit protein uL13 (Mycolicibacterium gilvum (strain PYR-GCK) (Mycobacterium gilvum (strain PYR-GCK))).